A 324-amino-acid chain; its full sequence is Uroporphyrinogen decarboxylase (324 aa).

Substrate is bound by residues 14–18, Phe32, Asp63, Tyr136, Ser191, and His302; that span reads RQAGR.

Belongs to the uroporphyrinogen decarboxylase family. As to quaternary structure, homodimer.

The protein resides in the cytoplasm. The catalysed reaction is uroporphyrinogen III + 4 H(+) = coproporphyrinogen III + 4 CO2. The protein operates within porphyrin-containing compound metabolism; protoporphyrin-IX biosynthesis; coproporphyrinogen-III from 5-aminolevulinate: step 4/4. Its function is as follows. Catalyzes the decarboxylation of four acetate groups of uroporphyrinogen-III to yield coproporphyrinogen-III. The sequence is that of Uroporphyrinogen decarboxylase from Neorickettsia sennetsu (strain ATCC VR-367 / Miyayama) (Ehrlichia sennetsu).